The sequence spans 147 residues: Ribonuclease 4 (147 aa).

The N-terminal stretch at 1–28 is a signal peptide; the sequence is MALQRTHSLLLLLLLTLLGLGLVQPSYG. Gln-29 is subject to Pyrrolidone carboxylic acid. 5 residues coordinate dUMP: Arg-35, His-40, Lys-68, Asn-71, and Thr-72. The Proton acceptor role is filled by His-40. 4 disulfides stabilise this stretch: Cys-53–Cys-109, Cys-67–Cys-120, Cys-85–Cys-135, and Cys-92–Cys-99. Residue His-144 is the Proton donor of the active site. Phe-145 serves as a coordination point for dUMP.

The protein belongs to the pancreatic ribonuclease family. Expressed in the cortical and medullary tubules of the kidney, and in the transitional epithelium of the urinary bladder (at protein level).

It localises to the secreted. Functionally, cleaves preferentially after uridine bases. Has antimicrobial activity against uropathogenic E.coli (UPEC). Probably contributes to urinary tract sterility. This chain is Ribonuclease 4 (RNASE4), found in Homo sapiens (Human).